Reading from the N-terminus, the 129-residue chain is Glycine cleavage system H protein (129 aa).

The region spanning 24-106 (IAVIGITAYA…YGDGWLIKVR (83 aa)) is the Lipoyl-binding domain. Residue Lys65 is modified to N6-lipoyllysine.

Belongs to the GcvH family. In terms of assembly, the glycine cleavage system is composed of four proteins: P, T, L and H. The cofactor is (R)-lipoate.

The glycine cleavage system catalyzes the degradation of glycine. The H protein shuttles the methylamine group of glycine from the P protein to the T protein. The protein is Glycine cleavage system H protein of Synechococcus sp. (strain JA-3-3Ab) (Cyanobacteria bacterium Yellowstone A-Prime).